The primary structure comprises 152 residues: Nascent polypeptide-associated complex subunit beta (152 aa).

Disordered regions lie at residues 19–39 (IGKGTPRRKVKRAPARSAGDD) and 125–152 (NMQKNEKDAEEDDIPDLVAGENFESKVE). Basic residues predominate over residues 23–32 (TPRRKVKRAP). An NAC-A/B domain is found at 36 to 101 (AGDDKKLQAT…GEDKELTELV (66 aa)).

This sequence belongs to the NAC-beta family. Part of the nascent polypeptide-associated complex (NAC), consisting of npc-1/egd2 and npc-2/egd1. NAC associates with ribosomes via npc-2/egd1.

It localises to the cytoplasm. The protein localises to the nucleus. Its function is as follows. Component of the nascent polypeptide-associated complex (NAC), a dynamic component of the ribosomal exit tunnel, protecting the emerging polypeptides from interaction with other cytoplasmic proteins to ensure appropriate nascent protein targeting. The NAC complex also promotes mitochondrial protein import by enhancing productive ribosome interactions with the outer mitochondrial membrane and blocks the inappropriate interaction of ribosomes translating non-secretory nascent polypeptides with translocation sites in the membrane of the endoplasmic reticulum. Npc-2/egd1 may act as a transcription factor that exert a negative effect on the expression of several genes that are transcribed by RNA polymerase II. This chain is Nascent polypeptide-associated complex subunit beta (npc-2), found in Neurospora crassa (strain ATCC 24698 / 74-OR23-1A / CBS 708.71 / DSM 1257 / FGSC 987).